We begin with the raw amino-acid sequence, 1153 residues long: Tyrosine-protein kinase JAK1 (1153 aa).

The FERM domain occupies 32 to 416; sequence KGLEIHFYLA…GYFRLTVDAH (385 aa). Residues 435–540 form the SH2; atypical domain; that stretch reads GCHGPICTEY…NLRFQLRRCC (106 aa). 2 consecutive Protein kinase domains span residues 580 to 846 and 872 to 1150; these read IVQG…DIVM and LKKI…QQML. ATP is bound by residues 878–886 and K905; that span reads LGEGHFGKV. D1000 acts as the Proton acceptor in catalysis. Y1031 and Y1032 each carry phosphotyrosine; by autocatalysis.

It belongs to the protein kinase superfamily. Tyr protein kinase family. JAK subfamily. Mg(2+) is required as a cofactor.

The protein localises to the endomembrane system. It carries out the reaction L-tyrosyl-[protein] + ATP = O-phospho-L-tyrosyl-[protein] + ADP + H(+). Tyrosine kinase of the non-receptor type, involved in the IFN-alpha/beta/gamma signal pathway. Appears to be required in early development for specific cell migrations (epiboly), expression of homeobox protein goosecoid and formation of anterior structures. This chain is Tyrosine-protein kinase JAK1 (jak1), found in Danio rerio (Zebrafish).